The chain runs to 1563 residues: Superkiller complex protein 3 (1563 aa).

N-acetylserine is present on Ser2. TPR repeat units follow at residues 6 to 39, 40 to 73, 157 to 196, 272 to 305, 307 to 339, 386 to 419, 420 to 453, 455 to 492, 493 to 527, 564 to 597, 598 to 631, 632 to 665, 633 to 665, 673 to 713, 790 to 824, 826 to 860, 861 to 894, 980 to 1013, 1020 to 1053, 1055 to 1084, 1325 to 1358, and 1399 to 1432; these read VKTA…EKNN, YNAW…EPEQ, YELW…ADNI, GPGL…SPVC, AGWC…IDNF, PGLL…YPDL, AEAH…DAEV, EYHY…DAHM, GKVF…DDND, KWAW…DPKD, CNCW…NPDS, TYSV…KEDY, YSVF…KEDY, GECH…RADV, VQHL…DSNN, LHWN…EQIN, AAAW…DPSY, ASAF…LHSA, NVAV…ELED, IGFA…CKSE, KWSF…NPDQ, and VPAW…ASQQ.

The protein belongs to the SKI3 family. In terms of assembly, component of the SKI complex which consists of SKIC2, SKIC3 and SKIC8. Interacts with PAF1.

Its subcellular location is the cytoplasm. It is found in the nucleus. In terms of biological role, component of the SKI complex, a multiprotein complex that assists the RNA-degrading exosome during the mRNA decay and quality-control pathways. The SKI complex catalyzes mRNA extraction from 80S ribosomal complexes in the 3'-5' direction and channels mRNA to the cytosolic exosome for degradation. SKI-mediated extraction of mRNA from stalled ribosomes allow binding of the Pelota-HBS1L complex and subsequent ribosome disassembly by ABCE1 for ribosome recycling. In the nucleus, the SKI complex associates with transcriptionally active genes in a manner dependent on PAF1 complex (PAF1C). The sequence is that of Superkiller complex protein 3 from Mus musculus (Mouse).